A 264-amino-acid polypeptide reads, in one-letter code: Thymidylate synthase (264 aa).

R21 provides a ligand contact to dUMP. Residue H51 coordinates (6R)-5,10-methylene-5,6,7,8-tetrahydrofolate. 126–127 is a dUMP binding site; sequence RR. Catalysis depends on C146, which acts as the Nucleophile. Residues 166–169, N177, and 207–209 each bind dUMP; these read RSAD and HIY. D169 contacts (6R)-5,10-methylene-5,6,7,8-tetrahydrofolate. A263 contributes to the (6R)-5,10-methylene-5,6,7,8-tetrahydrofolate binding site.

This sequence belongs to the thymidylate synthase family. Bacterial-type ThyA subfamily. As to quaternary structure, homodimer.

The protein localises to the cytoplasm. It carries out the reaction dUMP + (6R)-5,10-methylene-5,6,7,8-tetrahydrofolate = 7,8-dihydrofolate + dTMP. The protein operates within pyrimidine metabolism; dTTP biosynthesis. Catalyzes the reductive methylation of 2'-deoxyuridine-5'-monophosphate (dUMP) to 2'-deoxythymidine-5'-monophosphate (dTMP) while utilizing 5,10-methylenetetrahydrofolate (mTHF) as the methyl donor and reductant in the reaction, yielding dihydrofolate (DHF) as a by-product. This enzymatic reaction provides an intracellular de novo source of dTMP, an essential precursor for DNA biosynthesis. The protein is Thymidylate synthase of Vesicomyosocius okutanii subsp. Calyptogena okutanii (strain HA).